The chain runs to 276 residues: 2,3,4,5-tetrahydropyridine-2,6-dicarboxylate N-succinyltransferase (276 aa).

Residues R100 and D137 each contribute to the substrate site.

This sequence belongs to the transferase hexapeptide repeat family. Homotrimer.

It localises to the cytoplasm. The catalysed reaction is (S)-2,3,4,5-tetrahydrodipicolinate + succinyl-CoA + H2O = (S)-2-succinylamino-6-oxoheptanedioate + CoA. Its pathway is amino-acid biosynthesis; L-lysine biosynthesis via DAP pathway; LL-2,6-diaminopimelate from (S)-tetrahydrodipicolinate (succinylase route): step 1/3. The sequence is that of 2,3,4,5-tetrahydropyridine-2,6-dicarboxylate N-succinyltransferase from Zymomonas mobilis subsp. mobilis (strain ATCC 31821 / ZM4 / CP4).